The chain runs to 231 residues: Isoprenyl transferase (231 aa).

The active site involves Asp14. A Mg(2+)-binding site is contributed by Asp14. Substrate contacts are provided by residues 15 to 18 (GNGR), Trp19, Arg27, His31, and 59 to 61 (STE). Asn62 functions as the Proton acceptor in the catalytic mechanism. Substrate is bound by residues Trp63, Arg65, Arg176, and 182 to 184 (RIS). Glu195 contributes to the Mg(2+) binding site.

The protein belongs to the UPP synthase family. In terms of assembly, homodimer. Mg(2+) is required as a cofactor.

Catalyzes the condensation of isopentenyl diphosphate (IPP) with allylic pyrophosphates generating different type of terpenoids. In Aquifex aeolicus (strain VF5), this protein is Isoprenyl transferase.